Here is a 380-residue protein sequence, read N- to C-terminus: Acetylornithine deacetylase (380 aa).

His-79 contacts Zn(2+). The active site involves Asp-81. Asp-109 serves as a coordination point for Zn(2+). Residue Glu-139 is part of the active site. Positions 140, 164, and 351 each coordinate Zn(2+).

Belongs to the peptidase M20A family. ArgE subfamily. In terms of assembly, homodimer. Zn(2+) is required as a cofactor. Requires Co(2+) as cofactor. It depends on glutathione as a cofactor.

The protein localises to the cytoplasm. The enzyme catalyses N(2)-acetyl-L-ornithine + H2O = L-ornithine + acetate. The protein operates within amino-acid biosynthesis; L-arginine biosynthesis; L-ornithine from N(2)-acetyl-L-ornithine (linear): step 1/1. Its function is as follows. Catalyzes the hydrolysis of the amide bond of N(2)-acetylated L-amino acids. Cleaves the acetyl group from N-acetyl-L-ornithine to form L-ornithine, an intermediate in L-arginine biosynthesis pathway, and a branchpoint in the synthesis of polyamines. In Myxococcus xanthus, this protein is Acetylornithine deacetylase.